Consider the following 237-residue polypeptide: MIIIPAVDIKNGKCVQLVQGEPGTEQVVIENPAEVAKQWEQKGAKKLHIVDLDGALGSGRNLSIVKEIIEKTKSPIQLGGGIRSVSDAKKLLEIGVNTVIIGTMAIKNPEIIKELSSEYGCERICVSLDSKNNKVVTHGWKESTDKTPIEYAKLFEKMGAGSILFTNVDVEGLLNGINLEPIKELLNNVSIPIIYSGGITSVDDLKVLSDIGVDYVVIGSALYKGLITLEDALKYQK.

The active-site Proton acceptor is Asp8. Asp129 acts as the Proton donor in catalysis.

This sequence belongs to the HisA/HisF family.

It is found in the cytoplasm. The enzyme catalyses 1-(5-phospho-beta-D-ribosyl)-5-[(5-phospho-beta-D-ribosylamino)methylideneamino]imidazole-4-carboxamide = 5-[(5-phospho-1-deoxy-D-ribulos-1-ylimino)methylamino]-1-(5-phospho-beta-D-ribosyl)imidazole-4-carboxamide. It functions in the pathway amino-acid biosynthesis; L-histidine biosynthesis; L-histidine from 5-phospho-alpha-D-ribose 1-diphosphate: step 4/9. The polypeptide is 1-(5-phosphoribosyl)-5-[(5-phosphoribosylamino)methylideneamino] imidazole-4-carboxamide isomerase (Methanosphaera stadtmanae (strain ATCC 43021 / DSM 3091 / JCM 11832 / MCB-3)).